Reading from the N-terminus, the 316-residue chain is Glutathione synthetase (316 aa).

The ATP-grasp domain occupies 125–310 (KLFTAWFSDL…ITGMLMDAIE (186 aa)). ATP is bound at residue 151–207 (WEKHSDIILKPLDGMGGASIFRVKEGDPNLGVIAETLTEHGTCYCMAQNYLPAIKDG). Glutamate 281 and asparagine 283 together coordinate Mg(2+).

This sequence belongs to the prokaryotic GSH synthase family. Mg(2+) is required as a cofactor. Mn(2+) serves as cofactor.

The catalysed reaction is gamma-L-glutamyl-L-cysteine + glycine + ATP = glutathione + ADP + phosphate + H(+). It functions in the pathway sulfur metabolism; glutathione biosynthesis; glutathione from L-cysteine and L-glutamate: step 2/2. This chain is Glutathione synthetase, found in Shigella flexneri.